The following is a 251-amino-acid chain: Coproheme decarboxylase (251 aa).

Fe-coproporphyrin III-binding positions include Arg133, 147–151, His174, Gln187, and Ser225; that span reads YPMSK. Tyr147 is a catalytic residue.

The protein belongs to the ChdC family. Type 1 subfamily. The cofactor is Fe-coproporphyrin III.

The enzyme catalyses Fe-coproporphyrin III + 2 H2O2 + 2 H(+) = heme b + 2 CO2 + 4 H2O. It catalyses the reaction Fe-coproporphyrin III + H2O2 + H(+) = harderoheme III + CO2 + 2 H2O. The catalysed reaction is harderoheme III + H2O2 + H(+) = heme b + CO2 + 2 H2O. The protein operates within porphyrin-containing compound metabolism; protoheme biosynthesis. Involved in coproporphyrin-dependent heme b biosynthesis. Catalyzes the decarboxylation of Fe-coproporphyrin III (coproheme) to heme b (protoheme IX), the last step of the pathway. The reaction occurs in a stepwise manner with a three-propionate intermediate. In Listeria monocytogenes serotype 4a (strain HCC23), this protein is Coproheme decarboxylase.